The following is a 103-amino-acid chain: Small ribosomal subunit protein uS10 (103 aa).

It belongs to the universal ribosomal protein uS10 family. Part of the 30S ribosomal subunit.

Functionally, involved in the binding of tRNA to the ribosomes. The protein is Small ribosomal subunit protein uS10 of Clostridioides difficile (strain 630) (Peptoclostridium difficile).